We begin with the raw amino-acid sequence, 354 residues long: DNA polymerase IV (354 aa).

In terms of domain architecture, UmuC spans 6–187 (IIHVDCDCFY…LPVARLHGVG (182 aa)). Positions 10 and 105 each coordinate Mg(2+). Residue Glu-106 is part of the active site.

This sequence belongs to the DNA polymerase type-Y family. Monomer. The cofactor is Mg(2+).

It localises to the cytoplasm. It carries out the reaction DNA(n) + a 2'-deoxyribonucleoside 5'-triphosphate = DNA(n+1) + diphosphate. In terms of biological role, poorly processive, error-prone DNA polymerase involved in untargeted mutagenesis. Copies undamaged DNA at stalled replication forks, which arise in vivo from mismatched or misaligned primer ends. These misaligned primers can be extended by PolIV. Exhibits no 3'-5' exonuclease (proofreading) activity. May be involved in translesional synthesis, in conjunction with the beta clamp from PolIII. The polypeptide is DNA polymerase IV (Pseudomonas putida (strain GB-1)).